A 119-amino-acid chain; its full sequence is MORF4 family associated protein 1 like 2 (119 aa).

The segment covering 1 to 16 (MRPVDADEAREPREEP) has biased composition (basic and acidic residues). The tract at residues 1 to 36 (MRPVDADEAREPREEPGSPLSPAPRAGRENLASLER) is disordered.

The protein belongs to the MORF4 family-associated protein family. As to quaternary structure, may interact with CDK2AP1.

Its function is as follows. May play a role in cell proliferation. The protein is MORF4 family associated protein 1 like 2 of Homo sapiens (Human).